The primary structure comprises 141 residues: Large ribosomal subunit protein uL16 (141 aa).

A disordered region spans residues 1 to 20 (MLMPKRTKYRKQMKGRNRGK).

Belongs to the universal ribosomal protein uL16 family. As to quaternary structure, part of the 50S ribosomal subunit.

Functionally, binds 23S rRNA and is also seen to make contacts with the A and possibly P site tRNAs. In Helicobacter hepaticus (strain ATCC 51449 / 3B1), this protein is Large ribosomal subunit protein uL16.